A 172-amino-acid polypeptide reads, in one-letter code: NADH-quinone oxidoreductase subunit B (172 aa).

Cys-52, Cys-53, Cys-117, and Cys-147 together coordinate [4Fe-4S] cluster.

This sequence belongs to the complex I 20 kDa subunit family. NDH-1 is composed of 14 different subunits. Subunits NuoB, C, D, E, F, and G constitute the peripheral sector of the complex. [4Fe-4S] cluster serves as cofactor.

It is found in the cell inner membrane. The enzyme catalyses a quinone + NADH + 5 H(+)(in) = a quinol + NAD(+) + 4 H(+)(out). Functionally, NDH-1 shuttles electrons from NADH, via FMN and iron-sulfur (Fe-S) centers, to quinones in the respiratory chain. Couples the redox reaction to proton translocation (for every two electrons transferred, four hydrogen ions are translocated across the cytoplasmic membrane), and thus conserves the redox energy in a proton gradient. In Ehrlichia ruminantium (strain Gardel), this protein is NADH-quinone oxidoreductase subunit B.